Reading from the N-terminus, the 1233-residue chain is Structural maintenance of chromosomes protein 1A (1233 aa).

32–39 is a binding site for ATP; the sequence is GPNGSGKS. Coiled-coil stretches lie at residues 104-124 and 163-503; these read EYKI…LEKL and ELAQ…KAEI. Basic and acidic residues predominate over residues 284-293; it reads IKEKDSELNQ. Disordered stretches follow at residues 284-308 and 348-369; these read IKEK…TSHK and QEFE…TLEE. Ser358 and Ser360 each carry phosphoserine. The 115-residue stretch at 515–629 folds into the SMC hinge domain; sequence VYGRLIDLCQ…DNVEDARRIA (115 aa). 2 positions are modified to N6-acetyllysine: Lys648 and Lys713. A coiled-coil region spans residues 667-935; sequence DEKAVDKLKE…RHNLLQACKM (269 aa). A disordered region spans residues 947–969; that stretch reads MDDISQEEGSSQGEESVSGSQRT. Residues 953 to 967 are compositionally biased toward low complexity; it reads EEGSSQGEESVSGSQ. A phosphoserine mark is found at Ser957, Ser962, Ser966, and Ser970. The stretch at 988-1068 forms a coiled coil; it reads EDLKDAQAEE…FEQIKKERFD (81 aa). Position 1037 is an N6-acetyllysine (Lys1037).

It belongs to the SMC family. SMC1 subfamily. As to quaternary structure, forms a heterodimer with SMC3 in cohesin complexes. Cohesin complexes are composed of the SMC1 (SMC1A or SMC1B) and SMC3 heterodimer attached via their SMC hinge domain, RAD21 which link them, and one STAG protein (STAG1, STAG2 or STAG3), which interacts with RAD21. In germ cell cohesin complexes, SMC1A is mutually exclusive with SMC1B. Interacts with STAG3. Found in a complex with CDCA5, SMC3 and RAD21, PDS5A/SCC-112 and PDS5B/APRIN. Found in a complex containing POLE and SMC3. Interacts with BRCA1, SYCP2, NDC80, RPGR and BRAT1. The cohesin complex interacts with the cohesin loading complex subunits NIPBL/Scc2 (via HEAT repeats) and MAU2/Scc4. NIPBL directly contacts all members of the complex, RAD21, SMC1A/B, SMC3 and STAG1. In terms of processing, phosphorylated upon ionizing radiation or DNA methylation. Phosphorylation of Ser-957 and Ser-966 activates it and is required for S-phase checkpoint activation. Post-translationally, ubiquitinated by the DCX(DCAF15) complex, leading to its degradation. Ubiquitous (at protein level).

It localises to the nucleus. The protein resides in the chromosome. The protein localises to the centromere. In terms of biological role, involved in chromosome cohesion during cell cycle and in DNA repair. Involved in DNA repair via its interaction with BRCA1 and its related phosphorylation by ATM, and works as a downstream effector in the ATM/NBS1 branch of S-phase checkpoint. Central component of cohesin complex. The cohesin complex is required for the cohesion of sister chromatids after DNA replication. The cohesin complex apparently forms a large proteinaceous ring within which sister chromatids can be trapped. At anaphase, the complex is cleaved and dissociates from chromatin, allowing sister chromatids to segregate. The cohesin complex may also play a role in spindle pole assembly during mitosis. Involved in DNA repair via its interaction with BRCA1 and its related phosphorylation by ATM, or via its phosphorylation by ATR. Works as a downstream effector both in the ATM/NBS1 branch and in the ATR/MSH2 branch of S-phase checkpoint. The sequence is that of Structural maintenance of chromosomes protein 1A (Smc1a) from Mus musculus (Mouse).